Here is a 669-residue protein sequence, read N- to C-terminus: Zeaxanthin epoxidase, chloroplastic (669 aa).

The N-terminal 49 residues, 1-49 (MYSTVFYTSVHPSTSVLSRKQLPLLISKDFSAELYHSLPCRSLENGHIN), are a transit peptide targeting the chloroplast. FAD contacts are provided by residues 87-115 (KVLV…LVFE) and 365-378 (TFSW…LLGD). Residues 553 to 617 (IVLSRDEDVP…HGTWVTDNEG (65 aa)) form the FHA domain.

Requires FAD as cofactor.

Its subcellular location is the plastid. It is found in the chloroplast. The catalysed reaction is all-trans-zeaxanthin + 4 reduced [2Fe-2S]-[ferredoxin] + 2 O2 + 4 H(+) = all-trans-violaxanthin + 4 oxidized [2Fe-2S]-[ferredoxin] + 2 H2O. The protein operates within plant hormone biosynthesis; abscisate biosynthesis. Converts zeaxanthin into antheraxanthin and subsequently violaxanthin. Involved in the epoxidation of zeaxanthin. Plays an important role in resistance to stresses, seed development and dormancy. This is Zeaxanthin epoxidase, chloroplastic from Solanum lycopersicum (Tomato).